The primary structure comprises 566 residues: Deformed epidermal autoregulatory factor 1 homolog (566 aa).

Disordered regions lie at residues 33–62 and 163–191; these read AESE…ETRR and GLKG…KGGT. Residues 170 to 182 show a composition bias toward pro residues; sequence PLTPGPQSPPTPL. Phosphothreonine is present on threonine 172. A Phosphoserine modification is found at serine 177. Phosphothreonine is present on threonine 180. The 81-residue stretch at 194-274 folds into the SAND domain; sequence NWDPSVYDSE…QCLIQDGILN (81 aa). Positions 300–306 match the Nuclear localization signal motif; it reads PYKRRKK. The interaction with LMO4 stretch occupies residues 404 to 479; it reads IAPFPEAALP…QLKTLFEQAK (76 aa). Phosphothreonine is present on threonine 433. Serine 444 and serine 449 each carry phosphoserine. Residues cysteine 505, cysteine 508, cysteine 516, cysteine 519, cysteine 525, cysteine 529, histidine 537, and cysteine 541 each contribute to the Zn(2+) site. The segment at 505–541 adopts an MYND-type zinc-finger fold; it reads CVNCGREAMSECTGCHKVNYCSTFCQRKDWKDHQHVC.

Homodimer. Isoform 1 and isoform 2 may form a heterodimer. May interact with the corepressors NCOR1 and NCRO2. Identified in a complex with XRCC5 and XRCC6. Interacts (via the SAND domain) with the DNA-PK complex subunit XRCC6; the interaction is direct with XRCC6 and may be inhibited by DNA-binding. Interacts with LMO4; LMO4 blocks export from nucleus. Interacts with LMO2 and CLIM2. In terms of processing, may be phosphorylated by DNA-PK complex in a DNA independent manner (in vitro). Ubiquitously expressed during embryogenesis, with higher expression in regions of the central nervous system, dorsal root ganglia, submandibular gland, epidermis and breast. In 12-week-old NOD mice, expression of isoform 2 is sevenfold higher in lymph node stromal elements than in T-cells and tenfold higher than in B-cells.

The protein localises to the nucleus. Its subcellular location is the cytoplasm. Functionally, transcription factor that binds to sequence with multiple copies of 5'-TTC[CG]G-3' present in its own promoter and that of the HNRPA2B1 gene. Down-regulates transcription of these genes. Binds to the retinoic acid response element (RARE) 5'-AGGGTTCACCGAAAGTTCA-3'. Activates the proenkephalin gene independently of promoter binding, probably through protein-protein interaction. Regulates epithelial cell proliferation and side-branching in the mammary gland. Required for neural tube closure and skeletal patterning. Controls the expression of peripheral tissue antigens in pancreatic lymph nodes. Isoform 1 displays greater transcriptional activity than isoform 2. Isoform 2 may inhibit transcriptional activity of isoform 1 by interacting with it and retaining it in the cytoplasm. Transcriptional activator of EIF4G3. May also involved in behavior. The sequence is that of Deformed epidermal autoregulatory factor 1 homolog (Deaf1) from Mus musculus (Mouse).